Consider the following 129-residue polypeptide: MARVKRAVNAHKKRRSVLKASKGYRGQRSRLYRKAKEQQLHSLNYAYRDRRARKGEFRKLWISRINAAARANDITYNRLIQGLKAAGVEVDRKNLADIAITDPAAFTALVDVARAALPEDVNAPSGEAA.

The protein belongs to the bacterial ribosomal protein bL20 family.

Its function is as follows. Binds directly to 23S ribosomal RNA and is necessary for the in vitro assembly process of the 50S ribosomal subunit. It is not involved in the protein synthesizing functions of that subunit. The chain is Large ribosomal subunit protein bL20 from Mycobacterium marinum (strain ATCC BAA-535 / M).